The chain runs to 339 residues: Glucokinase (339 aa).

Residue 16–21 (GDIGGT) coordinates ATP.

The protein belongs to the bacterial glucokinase family.

It localises to the cytoplasm. It carries out the reaction D-glucose + ATP = D-glucose 6-phosphate + ADP + H(+). This Sinorhizobium fredii (strain NBRC 101917 / NGR234) protein is Glucokinase.